The chain runs to 383 residues: 8-amino-7-oxononanoate synthase (383 aa).

Arg21 contacts substrate. 108-109 contacts pyridoxal 5'-phosphate; sequence GY. His133 lines the substrate pocket. Pyridoxal 5'-phosphate is bound by residues Ser179, His207, and Thr233. Lys236 bears the N6-(pyridoxal phosphate)lysine mark. Thr350 contacts substrate.

The protein belongs to the class-II pyridoxal-phosphate-dependent aminotransferase family. BioF subfamily. As to quaternary structure, homodimer. Pyridoxal 5'-phosphate serves as cofactor.

The catalysed reaction is 6-carboxyhexanoyl-[ACP] + L-alanine + H(+) = (8S)-8-amino-7-oxononanoate + holo-[ACP] + CO2. It functions in the pathway cofactor biosynthesis; biotin biosynthesis. Catalyzes the decarboxylative condensation of pimeloyl-[acyl-carrier protein] and L-alanine to produce 8-amino-7-oxononanoate (AON), [acyl-carrier protein], and carbon dioxide. This Serratia proteamaculans (strain 568) protein is 8-amino-7-oxononanoate synthase.